The primary structure comprises 227 residues: Uracil phosphoribosyltransferase (227 aa).

36–40 (KGLVK) contributes to the GTP binding site. Residues Arg86, Arg111, and 145 to 153 (DPMLATGST) each bind 5-phospho-alpha-D-ribose 1-diphosphate. Uracil-binding positions include Ile212 and 217–219 (GDA). Asp218 contacts 5-phospho-alpha-D-ribose 1-diphosphate.

It belongs to the UPRTase family. It depends on Mg(2+) as a cofactor.

The catalysed reaction is UMP + diphosphate = 5-phospho-alpha-D-ribose 1-diphosphate + uracil. The protein operates within pyrimidine metabolism; UMP biosynthesis via salvage pathway; UMP from uracil: step 1/1. Its activity is regulated as follows. Allosterically activated by GTP. Its function is as follows. Catalyzes the conversion of uracil and 5-phospho-alpha-D-ribose 1-diphosphate (PRPP) to UMP and diphosphate. The protein is Uracil phosphoribosyltransferase of Halobacterium salinarum (strain ATCC 700922 / JCM 11081 / NRC-1) (Halobacterium halobium).